The primary structure comprises 146 residues: Pre-mRNA-splicing factor cwf14 (146 aa).

It belongs to the BUD31 (G10) family. Belongs to the 40S cdc5-associated complex (or cwf complex), a spliceosome sub-complex reminiscent of a late-stage spliceosome composed of the U2, U5 and U6 snRNAs and at least brr2, cdc5, cwf2/prp3, cwf3/syf1, cwf4/syf3, cwf5/ecm2, spp42/cwf6, cwf7/spf27, cwf8, cwf9, cwf10, cwf11, cwf12, prp45/cwf13, cwf14, cwf15, cwf16, cwf17, cwf18, cwf19, cwf20, cwf21, cwf22, cwf23, cwf24, cwf25, cwf26, cyp7/cwf27, cwf28, cwf29/ist3, lea1, msl1, prp5/cwf1, prp10, prp12/sap130, prp17, prp22, sap61, sap62, sap114, sap145, slu7, smb1, smd1, smd3, smf1, smg1 and syf2.

Its subcellular location is the nucleus. Functionally, involved in mRNA splicing where it associates with cdc5 and the other cwf proteins as part of the spliceosome. The sequence is that of Pre-mRNA-splicing factor cwf14 (cwf14) from Schizosaccharomyces pombe (strain 972 / ATCC 24843) (Fission yeast).